The following is a 492-amino-acid chain: MMNNLSHLESDYSEYVEVDPTGRYGRYNEVLGKGSSKTVYRGFDEYQGIEVAWNQVKLYDFLQSPQELERLYCEIHLLKTLKHKSIMKFYASWVDTDNRNINFVTEMFTSGTLRQYRLKHKRVNIRAVKNWCRQILRGLNYLHTHDPPVIHRDLKCDNIFINGNQGEVKIGDLGLAACLQHSHAAHCVGTPEFMAPEVYKEEYNQLVDIYSFGMCVLEMVTFDYPYSECSHPAQIYKRVISGKKPDGLDKVKDPEVRGFIEKCLATVSLRLSACELLDDHFLCIDESDMRRVESEKGLIDEAGTPLRHSYHIPHYSNGYYSLYNQNQWDYNGDETVESHEIDLLEFQNDDDEEEEDKRFGSVDISIKGKRRDNGDGLFLRLKTVNKEGCVRNIYFPFDIETDTAISVAREMVEELEMDDRDVTKIANMIDGEIASLVPNWSIFCSSESNRSSVGSVMDFNEMQCGRDGCEEKHGRFEEITFEITVNDSDEED.

Residues 25-282 (GRYNEVLGKG…ACELLDDHFL (258 aa)) enclose the Protein kinase domain. ATP-binding positions include 105–108 (TEMF) and Lys155. Asp172 serves as the catalytic Proton acceptor.

The protein belongs to the protein kinase superfamily. Ser/Thr protein kinase family. WNK subfamily.

It carries out the reaction L-seryl-[protein] + ATP = O-phospho-L-seryl-[protein] + ADP + H(+). It catalyses the reaction L-threonyl-[protein] + ATP = O-phospho-L-threonyl-[protein] + ADP + H(+). Its function is as follows. May regulate flowering time by modulating the photoperiod pathway. In Arabidopsis thaliana (Mouse-ear cress), this protein is Probable serine/threonine-protein kinase WNK9 (WNK9).